A 617-amino-acid chain; its full sequence is 1-deoxy-D-xylulose-5-phosphate synthase (617 aa).

Thiamine diphosphate contacts are provided by residues His77 and 118-120 (GHS). Residue Asp149 participates in Mg(2+) binding. Thiamine diphosphate is bound by residues 150–151 (GA), Asn178, Tyr286, and Glu367. Residue Asn178 coordinates Mg(2+).

Belongs to the transketolase family. DXPS subfamily. As to quaternary structure, homodimer. Requires Mg(2+) as cofactor. It depends on thiamine diphosphate as a cofactor.

It catalyses the reaction D-glyceraldehyde 3-phosphate + pyruvate + H(+) = 1-deoxy-D-xylulose 5-phosphate + CO2. It participates in metabolic intermediate biosynthesis; 1-deoxy-D-xylulose 5-phosphate biosynthesis; 1-deoxy-D-xylulose 5-phosphate from D-glyceraldehyde 3-phosphate and pyruvate: step 1/1. Catalyzes the acyloin condensation reaction between C atoms 2 and 3 of pyruvate and glyceraldehyde 3-phosphate to yield 1-deoxy-D-xylulose-5-phosphate (DXP). The sequence is that of 1-deoxy-D-xylulose-5-phosphate synthase from Actinobacillus pleuropneumoniae serotype 5b (strain L20).